Reading from the N-terminus, the 2055-residue chain is MLETIDKNRALQAAERLQSKLKERGDVANEDKLSLLKSVLQSPLFSQILNLQTSLQQLKDQVNIATLATAAADHAHTPQFSSAVISNLQSESLLLSPNHGNLEALPGPGAPAVMDGKPTCDELDQLIKNMAQGRHVEIFELLKPPCGGLGFSVVGLRSENRGELGIFVQEIQEGSVAHRDGRLKETDQILAINGQVLDQTITHQQAISILQKAKDTVQLVIARGSLPPVSSPRISRSPSAASTISAHSNPMHWQHVETIELVNDGSGLGFGIIGGKATGVIVKTILPGGVADQHGRLCSGDHILKIGDTDLAGMSSEQVAQVLRQCGNRVKLMIARGAVEETPASSSLGITLSSSTSSTSEMRVDASTQKNDESETFDVELTKNVQGLGITIAGYIGDKKLEPSGIFVKSITKSSAVEHDGRIQIGDQIIAVDGTNLQGFTNQQAVEVLRHTGQTVRLTLMRKGASQEAELTSRGDTAKDVDLPAENCEKDEESLSLKRNTSILPIEEEGFPLLSAELEEAEDVQQEAALLTKWQRIMGINYEIVVAHVSKFSENSGLGISLEATVGHHFIRSVLPEGPVGHSGKLFSGDELLEVNGINLLGENHQDVVNILKELPIDVTMVCCRRTVPPIALSEMDSLDINDLELTEKPHIDLGEFIGSSETEDPMLAMSDVDQNAEEIQTPLAMWEAGGQSIELEKGSRGLGFSILDYQDPIDPANTVIVIRSLVPGGIAEKDGRLFPGDRLMFVNDINLENSTLEEAVEALKGAPSGMVRIGVAKPLPLSPEEGYVSAKEDAFLCSPHACKESGLSDKALFRADLALIDTPDAESIAESRFESQFSPDNDSVYSTQASIFSLHDGTCSDGMNYGPSLPSSPPKDVTSSSEVVLGLHLSLEELYTQNLLQRQHAGSPPTDMRPAPTSGFPISDYTTTNAVEQKYECANPVAWPHSQLPSSLSTSELAPALPAVAQKYLTDQSSLASDAESVNLQSMSQEAFERTVTIAKGSSSLGMTVSANKDGLGVIVRSIIHGGAISRDGRIAVGDCILSINEESTISLTNAQARAMLRRHSLIGPDIKITYVPAEHLEEFRVSFGQQAGGIMALDIFSSYTGRDIPELPEREEGEGEESELQNAAYSSWSQPRRVELWREPSKSLGISIVGGRGMGSRLSNGEVMRGIFIKHVLEDSPAGKNGTLKPGDRIIEVDGMDLRDASHEQAVEAIRKAGNPVVFMVQSIINRPRKSPLPSLPHSLYPKYSFSSTNPFADSLQLTTDQAPSQSESETEKPALCNVPPSSPSVFSEMGSDCAQPSATAVSEDEDKEDEFGYSWKNIQERYGSLTGQLHVIELEKGQSGLGLSLAGNKDRTRMSVFIVGIDPTGAAGRDGRLQIADELLEINGQILYGRSHQNASSIIKCAPSKVKIIFIRNADAVNQMAVCPGIAADSPSSTSDSPQNKEVEPCSTTSASAADLSSLTDVYQLELPKDQGGLGIAICEEDTINGVMIESLTEHGGAAKDGRLKPGDHILAVDDEVVAGCPVEKFISLLKTAKATVKLTVRAENPACPAVPSSAVTVSGERKDNSQTPAVPAPDLEPIPSTSRSSTPAVFASDPATCPIIPGCETTIEISKGQTGLGLSIVGGSDTLLGAIIIHEVYEEGAACKDGRLWAGDQILEVNGIDLRKATHDEAINVLRQTPQRVRLTLYRDEAPYKEEDVCDTFTIELQKRPGKGLGLSIVGKRNDTGVFVSDIVKGGIADADGRLMQGDQILMVNGEDVRHATQEAVAALLKCSLGAVTLEVGRVKAAPFHSERRPSQSSQVSESSLSSFTPPLSGINTSESLESNSKKNALASEIQGLRTVEIKKGPADSLGLSIAGGVGSPLGDVPIFIAMMHPNGVAAQTQKLRVGDRIVTICGTSTDGMTHTQAVNLMKNASGSIEVQVVAGGDVSVVTGHQQELANPCLAFTGLTSSSIFPDDLGPPQSKTITLDRGPDGLGFSIVGGYGSPHGDLPIYVKTVFAKGAAAEDGRLKRGDQIIAVNGQSLEGVTHEEAVAILKRTKGTVTLMVLS.

Positions 1–63 (MLETIDKNRA…SLQQLKDQVN (63 aa)) constitute an L27 domain. Residues 138–225 (IFELLKPPCG…TVQLVIARGS (88 aa)) enclose the PDZ 1 domain. Position 231 is a phosphoserine (S231). The PDZ 2 domain occupies 258–338 (TIELVNDGSG…RVKLMIARGA (81 aa)). Over residues 348-360 (LGITLSSSTSSTS) the composition is skewed to low complexity. A disordered region spans residues 348-372 (LGITLSSSTSSTSEMRVDASTQKND). PDZ domains lie at 378–464 (DVEL…MRKG), 546–627 (VAHV…CRRT), and 693–779 (SIEL…VAKP). Phosphoserine is present on residues S783 and S1066. The 82-residue stretch at 996–1077 (TVTIAKGSSS…IGPDIKITYV (82 aa)) folds into the PDZ 6 domain. The segment at 1111-1130 (PELPEREEGEGEESELQNAA) is disordered. A PDZ 7 domain is found at 1139–1231 (RVELWREPSK…PVVFMVQSII (93 aa)). Position 1158 is an omega-N-methylarginine (R1158). A compositionally biased stretch (polar residues) spans 1264 to 1274 (LTTDQAPSQSE). The disordered stretch occupies residues 1264-1299 (LTTDQAPSQSESETEKPALCNVPPSSPSVFSEMGSD). The PDZ 8 domain maps to 1338–1421 (VIELEKGQSG…KVKIIFIRNA (84 aa)). Over residues 1435–1445 (ADSPSSTSDSP) the composition is skewed to low complexity. The interval 1435 to 1459 (ADSPSSTSDSPQNKEVEPCSTTSAS) is disordered. Positions 1471–1552 (QLELPKDQGG…TVKLTVRAEN (82 aa)) constitute a PDZ 9 domain. Residues 1557-1597 (AVPSSAVTVSGERKDNSQTPAVPAPDLEPIPSTSRSSTPAV) are disordered. 2 PDZ domains span residues 1614-1697 (TIEI…YRDE) and 1710-1792 (TIEL…GRVK). The tract at residues 1795 to 1834 (PFHSERRPSQSSQVSESSLSSFTPPLSGINTSESLESNSK) is disordered. Phosphoserine is present on residues S1803 and S1809. The segment covering 1803–1815 (SQSSQVSESSLSS) has biased composition (low complexity). The span at 1816–1834 (FTPPLSGINTSESLESNSK) shows a compositional bias: polar residues. 2 PDZ domains span residues 1847–1933 (TVEI…VAGG) and 1972–2055 (TITL…MVLS).

Interacts with CLDN5, DLG4, GRIN1, SYNGAP1, CAMK2A and CAMK2B, HTR2A, HTR2B, HTR2C, PLEKHA1/TAPP1 and PLEKHA2/TAPP2. Interacts with F11R/JAM, CLDN1, NG2, CXADR, CRB1, MPP4 and PALS1. Interacts with FAT4 (via cytoplasmic domain). Interacts with DLL1. In terms of tissue distribution, in the brain, it is strongly expressed in the choroid plexus. Within the hippocampal formation, strongest expression was seen in the soma of CA1-4 pyramidal cells. Expressed in most neocortical regions with the strongest expression in piriform cortex and amygdaloid nuclei but also detected in the subiculum and olfactory bulb. In the cerebellum, the highest level of expression was found in Purkinje cells. Moderately expressed in the granular layer and molecular layer. Expressed in the pontine nuclei, parts of spinal trigeminal nuclei, and the principal sensory trigeminal nuclei of the metencephalon. Expressed in all thalamic and hypothalamic nuclei, and the substantia nigra (at protein level). Ubiquitously expressed.

The protein resides in the cell membrane. Its subcellular location is the apical cell membrane. The protein localises to the postsynaptic density. It is found in the cell projection. It localises to the dendrite. The protein resides in the cell junction. Its subcellular location is the tight junction. The protein localises to the synapse. It is found in the synaptosome. Member of the NMDAR signaling complex that may play a role in control of AMPAR potentiation and synaptic plasticity in excitatory synapses. Promotes clustering of HT2RC at the cell surface. The polypeptide is Multiple PDZ domain protein (Mpdz) (Mus musculus (Mouse)).